Consider the following 49-residue polypeptide: Large ribosomal subunit protein bL33A (49 aa).

The tract at residues 20–49 (KKNKRNNPDRVEFKKYCPRDKKSTLHRETK) is disordered. Over residues 25–49 (NNPDRVEFKKYCPRDKKSTLHRETK) the composition is skewed to basic and acidic residues.

Belongs to the bacterial ribosomal protein bL33 family. As to quaternary structure, part of the 50S ribosomal subunit. Interacts with VmlR.

The sequence is that of Large ribosomal subunit protein bL33A (rpmGA) from Bacillus subtilis (strain 168).